We begin with the raw amino-acid sequence, 828 residues long: Putative dual specificity tyrosine-phosphorylation-regulated kinase 3 homolog (828 aa).

Residues 1–14 (MVGSQEKKNNHIEL) show a composition bias toward basic and acidic residues. Positions 1–26 (MVGSQEKKNNHIELSETPATDKNNLN) are disordered. Residues 17–26 (TPATDKNNLN) show a composition bias toward polar residues. A Protein kinase domain is found at 276-589 (YEMLKIIGKG…PSEALKHPWL (314 aa)). ATP-binding positions include 282–290 (IGKGSFGQV) and Lys-305. The active-site Proton acceptor is the Asp-402. Position 616 is a phosphoserine (Ser-616).

Belongs to the protein kinase superfamily. CMGC Ser/Thr protein kinase family. MNB/DYRK subfamily. Post-translationally, autophosphorylated on tyrosine residues.

It carries out the reaction L-seryl-[protein] + ATP = O-phospho-L-seryl-[protein] + ADP + H(+). It catalyses the reaction L-threonyl-[protein] + ATP = O-phospho-L-threonyl-[protein] + ADP + H(+). The enzyme catalyses L-tyrosyl-[protein] + ATP = O-phospho-L-tyrosyl-[protein] + ADP + H(+). In Drosophila melanogaster (Fruit fly), this protein is Putative dual specificity tyrosine-phosphorylation-regulated kinase 3 homolog (Dyrk3).